Consider the following 660-residue polypeptide: MSKEQKTFYLTTPIYYPSDKLHIGHAYTTVAGDAMARYKRLRGYNVMYLTGTDEHGQKIEQKAEAKGLTPKQFVDEIVSGIQDLWKKLDISYDDFIRTTEERHIKVVQQIFEQLLDQGDIYLGDYEGWYSIPDETFYTETQLVDKEYDADGNLIGGKSPDSGHPVEKVREQSYFFRMSKYADRLLQFYEENPQFIQPESRKNEMINNFIKPGLEDLAVSRTSFTWGVPVPRDPKHVVYVWIDALSNYITALGYGSDQQEKYENYWPADVHLVGKEIVRFHTIYWPIMLMALDLPLPKKVFGHGWLLMKDGKMSKSKGNVVDPVPLIDRYGLDALRYYLLREVPFGSDGVFTPEAFVERVNYDLANDLGNLLNRTVAMIEKYFDGKIPSYVKDGTPFDADLVELVYSTVKKVEDAMEEMEFSIALTAIGQLISRTNKYIDETQPWVLAKDESKREQLGAAMYHLAESIRYVSVLLQPFMTKAPQKIWEQLGIDSSLTTWESLETFGQIPGNTNVQKGQPLFPRLDVEEEVAHIKSLMGGSKKPEEAPKDEKEESDEITIDDFSKVELRIAEVIDAEPVKKADRLLKIQLDLGYEKRQVVSGIAKYYSPSDLIGKKVICVTNLKPVKLRGELSQGMILAGSEGDQLRLATVDGALPNGSLVK.

Positions 15–25 (YYPSDKLHIGH) match the 'HIGH' region motif. Positions 311 to 315 (KMSKS) match the 'KMSKS' region motif. Lys-314 is a binding site for ATP. The disordered stretch occupies residues 535 to 554 (LMGGSKKPEEAPKDEKEESD). Residues 540–550 (KKPEEAPKDEK) show a composition bias toward basic and acidic residues. The 101-residue stretch at 560-660 (DFSKVELRIA…GALPNGSLVK (101 aa)) folds into the tRNA-binding domain.

The protein belongs to the class-I aminoacyl-tRNA synthetase family. MetG type 2B subfamily. Homodimer.

The protein localises to the cytoplasm. The catalysed reaction is tRNA(Met) + L-methionine + ATP = L-methionyl-tRNA(Met) + AMP + diphosphate. Its function is as follows. Is required not only for elongation of protein synthesis but also for the initiation of all mRNA translation through initiator tRNA(fMet) aminoacylation. The protein is Methionine--tRNA ligase (metG) of Halalkalibacterium halodurans (strain ATCC BAA-125 / DSM 18197 / FERM 7344 / JCM 9153 / C-125) (Bacillus halodurans).